The following is a 578-amino-acid chain: Zinc finger-containing ubiquitin peptidase 1 (578 aa).

Residues 2–24 (LSCNICGETVTSEPDMKAHLIVH) form a C2H2-type 1 zinc finger. A C2H2-type 2; atypical zinc finger spans residues 29–52 (IICPFCKLSGVNYDEMCFHIETAH). 2 consecutive C2H2-type zinc fingers follow at residues 154 to 177 (PECP…KTKH) and 193 to 215 (YDCP…VDLH). An MIU region spans residues 226-248 (DRVQCSGDLQLAHQLQQEEDRKR). The interval 249 to 274 (RSEESRQEIEEFQKLQRQYGLDNSGG) is zUBD/ZHA. Lysine 262 is subject to N6-acetyllysine. Cysteine 360 functions as the Nucleophile in the catalytic mechanism. The active-site Proton acceptor is histidine 491. Aspartate 512 is a catalytic residue.

Belongs to the peptidase C78 family. ZUFSP subfamily. In terms of assembly, interacts with RPA1 and RPA2.

The protein localises to the cytoplasm. It is found in the nucleus. It carries out the reaction Thiol-dependent hydrolysis of ester, thioester, amide, peptide and isopeptide bonds formed by the C-terminal Gly of ubiquitin (a 76-residue protein attached to proteins as an intracellular targeting signal).. Functionally, deubiquitinase with endodeubiquitinase activity that specifically interacts with and cleaves 'Lys-63'-linked long polyubiquitin chains. Shows only weak activity against 'Lys-11' and 'Lys-48'-linked chains. Plays an important role in genome stability pathways, functioning to prevent spontaneous DNA damage and also promote cellular survival in response to exogenous DNA damage. Modulates the ubiquitination status of replication protein A (RPA) complex proteins in response to replication stress. In Homo sapiens (Human), this protein is Zinc finger-containing ubiquitin peptidase 1.